Consider the following 361-residue polypeptide: Homocitrate synthase (361 aa).

The Pyruvate carboxyltransferase domain maps to 1–251; the sequence is MVLDSTLREG…KYRLDLLYRV (251 aa). R8 is a 2-oxoglutarate binding site. E9 contacts Mg(2+). The 2-oxoglutarate site is built by H68, R128, and T162. Residues H188 and H190 each contribute to the Mg(2+) site. The active-site Proton acceptor is the H282.

It belongs to the alpha-IPM synthase/homocitrate synthase family. Homocitrate synthase LYS20/LYS21 subfamily. It depends on Mg(2+) as a cofactor. Requires Mn(2+) as cofactor.

It catalyses the reaction acetyl-CoA + 2-oxoglutarate + H2O = (2R)-homocitrate + CoA + H(+). The protein operates within amino-acid biosynthesis; L-lysine biosynthesis via AAA pathway; L-alpha-aminoadipate from 2-oxoglutarate: step 1/5. In terms of biological role, catalyzes the aldol-type condensation of 2-oxoglutarate with acetyl-CoA to yield homocitrate. Carries out the first step of the alpha-aminoadipate (AAA) lysine biosynthesis pathway. This Pyrococcus abyssi (strain GE5 / Orsay) protein is Homocitrate synthase.